Consider the following 31-residue polypeptide: Small protein MgtS (31 aa).

Residues 1–4 (MLGN) are Periplasmic-facing. Residues 5–25 (MNVFMAVLGIILFSGFLAAYF) form a helical membrane-spanning segment. At 26–31 (SHKWDD) the chain is on the cytoplasmic side.

In terms of assembly, interacts with MgtA.

The protein resides in the cell inner membrane. Its function is as follows. Modulates intracellular Mg(2+) levels to maintain cellular integrity upon Mg(2+) limitation. Acts by binding and stabilizing the Mg(2+) transporter MgtA, thereby leading to increased intracellular level of Mg(2+). May inhibit FtsH proteolysis of MgtA. This Escherichia coli (strain K12) protein is Small protein MgtS.